We begin with the raw amino-acid sequence, 196 residues long: Large ribosomal subunit protein uL18 (196 aa).

This sequence belongs to the universal ribosomal protein uL18 family. In terms of assembly, part of the 50S ribosomal subunit. Contacts the 5S and 23S rRNAs.

Its function is as follows. This is one of the proteins that bind and probably mediate the attachment of the 5S RNA into the large ribosomal subunit, where it forms part of the central protuberance. In Saccharolobus islandicus (strain L.S.2.15 / Lassen #1) (Sulfolobus islandicus), this protein is Large ribosomal subunit protein uL18.